A 357-amino-acid polypeptide reads, in one-letter code: Histidinol-phosphate aminotransferase 2 (357 aa).

The residue at position 215 (Lys-215) is an N6-(pyridoxal phosphate)lysine.

This sequence belongs to the class-II pyridoxal-phosphate-dependent aminotransferase family. Histidinol-phosphate aminotransferase subfamily. In terms of assembly, homodimer. Pyridoxal 5'-phosphate is required as a cofactor.

It catalyses the reaction L-histidinol phosphate + 2-oxoglutarate = 3-(imidazol-4-yl)-2-oxopropyl phosphate + L-glutamate. It functions in the pathway amino-acid biosynthesis; L-histidine biosynthesis; L-histidine from 5-phospho-alpha-D-ribose 1-diphosphate: step 7/9. This chain is Histidinol-phosphate aminotransferase 2, found in Thiobacillus denitrificans (strain ATCC 25259 / T1).